We begin with the raw amino-acid sequence, 357 residues long: Isopentenyl-diphosphate delta-isomerase (357 aa).

12–13 is a substrate binding site; that stretch reads RK. FMN-binding positions include Ser-70, 71 to 73, Ser-101, and Asn-130; that span reads SMT. Residue 101 to 103 participates in substrate binding; sequence SMR. Gln-165 lines the substrate pocket. Glu-166 provides a ligand contact to Mg(2+). FMN-binding positions include Lys-197 and 310–311; that span reads AR.

This sequence belongs to the IPP isomerase type 2 family. As to quaternary structure, homooctamer. Dimer of tetramers. FMN is required as a cofactor. The cofactor is NADPH. Requires Mg(2+) as cofactor.

The protein resides in the cytoplasm. The enzyme catalyses isopentenyl diphosphate = dimethylallyl diphosphate. In terms of biological role, involved in the biosynthesis of isoprenoids. Catalyzes the 1,3-allylic rearrangement of the homoallylic substrate isopentenyl (IPP) to its allylic isomer, dimethylallyl diphosphate (DMAPP). This is Isopentenyl-diphosphate delta-isomerase from Pelodictyon phaeoclathratiforme (strain DSM 5477 / BU-1).